We begin with the raw amino-acid sequence, 289 residues long: HTH-type transcriptional regulator HexR (289 aa).

The region spanning 1–77 (MNMLEKIQSQ…LHLAQSLANG (77 aa)) is the HTH rpiR-type domain. The segment at residues 37-56 (IAAMALEANVSEPTVNRFCR) is a DNA-binding region (H-T-H motif). The region spanning 121–260 (AVDLLTQAKK…ATGFTLRRGA (140 aa)) is the SIS domain.

Represses the expression of the hex regulon (zwf, eda, glp and gap). This is HTH-type transcriptional regulator HexR (hexR) from Escherichia coli (strain K12).